The following is a 1238-amino-acid chain: ATP-dependent helicase/nuclease subunit A (1238 aa).

The 469-residue stretch at 6-474 folds into the UvrD-like helicase ATP-binding domain; the sequence is TKWTETQKSA…IKLSENFRSR (469 aa). Position 27 to 34 (27 to 34) interacts with ATP; it reads AGAGTGKT. The region spanning 512-811 is the UvrD-like helicase C-terminal domain; the sequence is PFEGNCGGDV…RIMSIHKSKG (300 aa).

This sequence belongs to the helicase family. AddA subfamily. As to quaternary structure, heterodimer of AddA and AddB/RexB. Requires Mg(2+) as cofactor.

It carries out the reaction Couples ATP hydrolysis with the unwinding of duplex DNA by translocating in the 3'-5' direction.. The catalysed reaction is ATP + H2O = ADP + phosphate + H(+). Functionally, the heterodimer acts as both an ATP-dependent DNA helicase and an ATP-dependent, dual-direction single-stranded exonuclease. Recognizes the chi site generating a DNA molecule suitable for the initiation of homologous recombination. The AddA nuclease domain is required for chi fragment generation; this subunit has the helicase and 3' -&gt; 5' nuclease activities. The sequence is that of ATP-dependent helicase/nuclease subunit A from Clostridium kluyveri (strain NBRC 12016).